We begin with the raw amino-acid sequence, 438 residues long: Dol-P-Man:Man(5)GlcNAc(2)-PP-Dol alpha-1,3-mannosyltransferase (438 aa).

The residue at position 13 (Ser-13) is a Phosphoserine. Helical transmembrane passes span 41 to 61 (YTLL…FWVI), 95 to 115 (TGPL…FYAT), 123 to 143 (MAQN…FLIY), 149 to 169 (VPPF…SIFV), 172 to 192 (LFND…FLAQ), 203 to 223 (LAVS…FLLL), 231 to 251 (ALPK…PFLL), 289 to 309 (FHLA…LCRW), 332 to 352 (ALTP…GICF), 356 to 376 (LHYQ…WAMP), and 407 to 427 (AALH…PESF).

The protein belongs to the glycosyltransferase ALG3 family.

The protein localises to the endoplasmic reticulum membrane. It carries out the reaction an alpha-D-Man-(1-&gt;2)-alpha-D-Man-(1-&gt;2)-alpha-D-Man-(1-&gt;3)-[alpha-D-Man-(1-&gt;6)]-beta-D-Man-(1-&gt;4)-beta-D-GlcNAc-(1-&gt;4)-alpha-D-GlcNAc-diphospho-di-trans,poly-cis-dolichol + a di-trans,poly-cis-dolichyl beta-D-mannosyl phosphate = an alpha-D-Man-(1-&gt;2)-alpha-D-Man-(1-&gt;2)-alpha-D-Man-(1-&gt;3)-[alpha-D-Man-(1-&gt;3)-alpha-D-Man-(1-&gt;6)]-beta-D-Man-(1-&gt;4)-beta-D-GlcNAc-(1-&gt;4)-alpha-D-GlcNAc-diphospho-di-trans,poly-cis-dolichol + a di-trans,poly-cis-dolichyl phosphate + H(+). Its pathway is protein modification; protein glycosylation. In terms of biological role, dol-P-Man:Man(5)GlcNAc(2)-PP-Dol alpha-1,3-mannosyltransferase that operates in the biosynthetic pathway of dolichol-linked oligosaccharides, the glycan precursors employed in protein asparagine (N)-glycosylation. The assembly of dolichol-linked oligosaccharides begins on the cytosolic side of the endoplasmic reticulum membrane and finishes in its lumen. The sequential addition of sugars to dolichol pyrophosphate produces dolichol-linked oligosaccharides containing fourteen sugars, including two GlcNAcs, nine mannoses and three glucoses. Once assembled, the oligosaccharide is transferred from the lipid to nascent proteins by oligosaccharyltransferases. In the lumen of the endoplasmic reticulum, adds the first dolichyl beta-D-mannosyl phosphate derived mannose in an alpha-1,3 linkage to Man(5)GlcNAc(2)-PP-dolichol to produce Man(6)GlcNAc(2)-PP-dolichol. Man(6)GlcNAc(2)-PP-dolichol is a substrate for ALG9, the following enzyme in the biosynthetic pathway. This Mus musculus (Mouse) protein is Dol-P-Man:Man(5)GlcNAc(2)-PP-Dol alpha-1,3-mannosyltransferase.